The primary structure comprises 194 residues: Peptidyl-tRNA hydrolase (194 aa).

Tyrosine 17 provides a ligand contact to tRNA. Histidine 22 (proton acceptor) is an active-site residue. Positions 68, 70, and 116 each coordinate tRNA.

Belongs to the PTH family. As to quaternary structure, monomer.

It localises to the cytoplasm. It catalyses the reaction an N-acyl-L-alpha-aminoacyl-tRNA + H2O = an N-acyl-L-amino acid + a tRNA + H(+). Its function is as follows. Hydrolyzes ribosome-free peptidyl-tRNAs (with 1 or more amino acids incorporated), which drop off the ribosome during protein synthesis, or as a result of ribosome stalling. Functionally, catalyzes the release of premature peptidyl moieties from peptidyl-tRNA molecules trapped in stalled 50S ribosomal subunits, and thus maintains levels of free tRNAs and 50S ribosomes. This is Peptidyl-tRNA hydrolase from Pseudomonas entomophila (strain L48).